A 272-amino-acid polypeptide reads, in one-letter code: WIMGHMVNNIKQIDEFVNLGSNAIETDVSFDKKANPEYTYHGTPCDCGRDCLRWEYFNDFVKALRTATTPGNSKYDKLFLVVFDLKTGSLYDYQASEAGTKLAKNLLQHYRNNGNNGGRAYIILSIPNLKHFKLITGFQQTLKGEGHAELLDKVGYDFSGNDDIGDVQKIYEKAGVTGHVWQSDGITNCLLRGFTRINAAVANRDSANGIINKVYYWTVDKRQTTRDTLDANVDGIMTNYPDITVEILNEDAYKTKFRIATYEDNPWETFKE.

Histidine 5 is an active-site residue. Mg(2+) is bound by residues glutamate 25 and aspartate 27. Histidine 41 acts as the Nucleophile in catalysis. 2 disulfide bridges follow: cysteine 45-cysteine 51 and cysteine 47-cysteine 189. Position 84 (aspartate 84) interacts with Mg(2+).

Belongs to the arthropod phospholipase D family. Class II subfamily. Requires Mg(2+) as cofactor. As to expression, expressed by the venom gland.

Its subcellular location is the secreted. It carries out the reaction an N-(acyl)-sphingosylphosphocholine = an N-(acyl)-sphingosyl-1,3-cyclic phosphate + choline. The enzyme catalyses an N-(acyl)-sphingosylphosphoethanolamine = an N-(acyl)-sphingosyl-1,3-cyclic phosphate + ethanolamine. The catalysed reaction is a 1-acyl-sn-glycero-3-phosphocholine = a 1-acyl-sn-glycero-2,3-cyclic phosphate + choline. It catalyses the reaction a 1-acyl-sn-glycero-3-phosphoethanolamine = a 1-acyl-sn-glycero-2,3-cyclic phosphate + ethanolamine. Its function is as follows. Dermonecrotic toxins cleave the phosphodiester linkage between the phosphate and headgroup of certain phospholipids (sphingolipid and lysolipid substrates), forming an alcohol (often choline) and a cyclic phosphate. This toxin acts on sphingomyelin (SM). It may also act on ceramide phosphoethanolamine (CPE), lysophosphatidylcholine (LPC) and lysophosphatidylethanolamine (LPE), but not on lysophosphatidylserine (LPS), and lysophosphatidylglycerol (LPG). It acts by transphosphatidylation, releasing exclusively cyclic phosphate products as second products. Induces dermonecrosis, hemolysis, increased vascular permeability, edema, inflammatory response, and platelet aggregation. This is Dermonecrotic toxin LvSicTox-alphaIC1bv from Loxosceles variegata (Recluse spider).